The sequence spans 474 residues: Protein CyaE (474 aa).

The N-terminal stretch at 1–31 is a signal peptide; sequence MAAVQVRRRGRALALALWAGFALSVGGGVRA.

This sequence belongs to the outer membrane factor (OMF) (TC 1.B.17) family.

Its subcellular location is the cell outer membrane. CyaE is necessary for transport of calmodulin-sensitive adenylate cyclase-hemolysin (cyclolysin). This is Protein CyaE (cyaE) from Bordetella pertussis (strain Tohama I / ATCC BAA-589 / NCTC 13251).